Here is a 167-residue protein sequence, read N- to C-terminus: Sperm acrosome membrane-associated protein 3 (167 aa).

The Cytoplasmic segment spans residues 1-63 (MVSALREAPL…EARSRALRRR (63 aa)). Residues 64–84 (WCPAGIILLALISLLSCLLPA) traverse the membrane as a helical; Signal-anchor for type II membrane protein segment. Residues 85 to 167 (SEAKVYGRCE…VPNVCQMYCS (83 aa)) are Extracellular-facing. The 80-residue stretch at 88-167 (KVYGRCELAR…VPNVCQMYCS (80 aa)) folds into the C-type lysozyme domain. An intrachain disulfide couples cysteine 151 to cysteine 166.

It belongs to the glycosyl hydrolase 22 family. Interacts with ASTL. In terms of processing, the processed form derives from the membrane form by proteolytic processing.

The protein localises to the cytoplasmic vesicle. Its subcellular location is the secretory vesicle. It is found in the acrosome membrane. Sperm surface membrane protein that may be involved in sperm-egg plasma membrane adhesion and fusion during fertilization. It could be a potential receptor for the egg oligosaccharide residue N-acetylglucosamine, which is present in the extracellular matrix over the egg plasma membrane. The processed form has no detectable bacteriolytic activity in vitro. This chain is Sperm acrosome membrane-associated protein 3 (SPACA3), found in Pongo pygmaeus (Bornean orangutan).